A 133-amino-acid chain; its full sequence is Small ribosomal subunit protein uS8 (133 aa).

This sequence belongs to the universal ribosomal protein uS8 family. Part of the 30S ribosomal subunit. Contacts proteins S5 and S12.

In terms of biological role, one of the primary rRNA binding proteins, it binds directly to 16S rRNA central domain where it helps coordinate assembly of the platform of the 30S subunit. The sequence is that of Small ribosomal subunit protein uS8 from Micrococcus luteus (Micrococcus lysodeikticus).